The following is a 117-amino-acid chain: UPF0342 protein GWCH70_0629 (117 aa).

It belongs to the UPF0342 family.

The sequence is that of UPF0342 protein GWCH70_0629 from Geobacillus sp. (strain WCH70).